An 852-amino-acid chain; its full sequence is Potassium voltage-gated channel subfamily KQT member 2 (852 aa).

Topologically, residues 1–90 are cytoplasmic; the sequence is MVQKSRNGGV…LYNVLERPRG (90 aa). S52 is subject to Phosphoserine; by PKA. A helical membrane pass occupies residues 91–113; that stretch reads WAFIYHAYVFLLVFSCLVLSVFS. Residues 114 to 123 are Extracellular-facing; the sequence is TIKEYEKSSE. A helical transmembrane segment spans residues 124–145; the sequence is GALYILEIVTIVVFGVEYFVRI. The Cytoplasmic portion of the chain corresponds to 146-163; the sequence is WAAGCCCRYRGWRGRLKF. The chain crosses the membrane as a helical span at residues 164–183; sequence ARKPFCVIDIMVLIASIAVL. Residues 184–196 are Extracellular-facing; the sequence is AAGSQGNVFATSA. The chain crosses the membrane as a helical; Voltage-sensor span at residues 197 to 215; that stretch reads LRSLRFLQILRMIRMDRRG. R214 contributes to the a 1,2-diacyl-sn-glycero-3-phospho-(1D-myo-inositol-4,5-bisphosphate) binding site. Topologically, residues 216-227 are cytoplasmic; it reads GTWKLLGSVVYA. Residues 222–323 are mediates interaction with SLC5A3; that stretch reads GSVVYAHSKE…SGFALKVQEQ (102 aa). The helical transmembrane segment at 228–253 threads the bilayer; it reads HSKELVTAWYIGFLCLILASFLVYLA. K230 lines the a 1,2-diacyl-sn-glycero-3-phospho-(1D-myo-inositol-4,5-bisphosphate) pocket. The Extracellular portion of the chain corresponds to 254 to 263; that stretch reads EKGENDHFDT. An intramembrane region (pore-forming) is located at residues 264–276; sequence YADALWWGLITLT. Positions 277–282 match the Selectivity filter motif; that stretch reads TIGYGD. The Extracellular segment spans residues 277–287; it reads TIGYGDKYPQT. The helical transmembrane segment at 288-314 threads the bilayer; the sequence is WNGRLLAATFTLIGVSFFALPAGILGS. Over 315-852 the chain is Cytoplasmic; the sequence is GFALKVQEQH…GDVAWAGPRK (538 aa). Positions 317–522 are mediates interaction with calmodulin; the sequence is ALKVQEQHRQ…EDLTPGLKVS (206 aa). K327 is an a 1,2-diacyl-sn-glycero-3-phospho-(1D-myo-inositol-4,5-bisphosphate) binding site. A disordered region spans residues 404 to 469; sequence TFRKEPQPEP…SKVPKSWSFG (66 aa). The segment covering 440-457 has biased composition (polar residues); it reads PQAQTVRRSPSADQSLDD. A phosphoserine mark is found at S448, S450, S454, S458, S460, and S489. Disordered stretches follow at residues 579-601, 643-662, and 672-718; these read GPTI…EDPS, GAKE…SRDH, and IVRS…DHGS. The segment covering 583-592 has biased composition (basic and acidic residues); sequence TDKDRTKGPA. At S655 the chain carries Phosphoserine. S781 and S783 each carry phosphoserine. The tract at residues 818–852 is disordered; that stretch reads ESDTDSDLCTPCGPPPRSATGEGPFGDVAWAGPRK.

This sequence belongs to the potassium channel family. KQT (TC 1.A.1.15) subfamily. Kv7.2/KCNQ2 sub-subfamily. As to quaternary structure, heterotetramer with KCNQ3; forms heterotetrameric M-channel responsible for the M-current. Homotetrameric; forms a functional homotetrameric channel resulting in the expression of a small M-current. Interacts with calmodulin; the interaction is calcium-independent, constitutive and participates in the proper assembly of a functional M-channel. May associate with KCNE2. Interacts with IQCJ-SCHIP1. Interacts (via the pore module) with SLC5A3/SMIT1; forms a coregulatory complex that alters ion selectivity, voltage dependence and gating kinetics of the channel. Interacts with AKAP5; the interaction may help KCNQ2 channel complex to retain calcium-bound calmodulin. In terms of processing, KCNQ2/KCNQ3 heteromeric current can be increased by intracellular cyclic AMP, an effect that depends on phosphorylation of Ser-52 in the N-terminal region. KCNQ2/KCNQ3 are ubiquitinated by NEDD4L. Ubiquitination leads to protein degradation. Degradation induced by NEDD4L is inhibited by USP36. Expressed in brain and sympathetic ganglia. In brain, expressed in cortex, hippocampus, and cerebellum. In sympathetic ganglia, expressed at lower levels in celiac ganglia and superior mesenteric ganglia than in superior cervical ganglia.

Its subcellular location is the cell membrane. The catalysed reaction is K(+)(in) = K(+)(out). It carries out the reaction Rb(+)(in) = Rb(+)(out). It catalyses the reaction Cs(+)(in) = Cs(+)(out). The enzyme catalyses Na(+)(in) = Na(+)(out). Its activity is regulated as follows. Phosphatidylinositol-4,5-bisphosphate (PIP2) potentiates the activation of KCNQ channels by enhancing the electro-mechanical coupling of the voltage-sensing domain (VSD) and the pore-forming domain (PD). In the closed state of the channel, PIP2 is anchored at the S2-S3 loop; upon channel activation, PIP2 interacts with the S4-S5 linker and is involved in channel gating. Calcium suppresses KCNQ2 and KCNQ2-KCNQ3 channel currents, with calcium-bound calmodulin inducing a change in channel configuration which leads to the reduction of channel affinity for PIP2 and subsequent current suppression. Functionally, pore-forming subunit of the voltage-gated potassium (Kv) M-channel which is responsible for the M-current, a key controller of neuronal excitability. M-channel is composed of pore-forming subunits KCNQ2 and KCNQ3 assembled as heterotetramers. The native M-current has a slowly activating and deactivating potassium conductance which plays a critical role in determining the subthreshold electrical excitability of neurons as well as the responsiveness to synaptic inputs. M-channel is selectively permeable in vitro to other cations besides potassium, in decreasing order of affinity K(+) &gt; Rb(+) &gt; Cs(+) &gt; Na(+). M-channel association with SLC5A3/SMIT1 alters channel ion selectivity, increasing Na(+) and Cs(+) permeation relative to K(+). Suppressed by activation of the muscarinic acetylcholine receptor CHRM1. This chain is Potassium voltage-gated channel subfamily KQT member 2, found in Rattus norvegicus (Rat).